The following is a 419-amino-acid chain: D-mannonate dehydratase (419 aa).

Residues Asn54 and His139 each coordinate substrate. Tyr176 functions as the Proton donor/acceptor in the catalytic mechanism. A Mg(2+)-binding site is contributed by Asp227. The active-site Proton donor/acceptor is His229. Mg(2+)-binding residues include Glu253 and Glu279. The substrate site is built by Glu279, Arg300, His329, Asp333, and Glu356.

It belongs to the mandelate racemase/muconate lactonizing enzyme family. GalD subfamily. Mg(2+) serves as cofactor.

It carries out the reaction D-mannonate = 2-dehydro-3-deoxy-D-gluconate + H2O. Its pathway is carbohydrate metabolism; pentose and glucuronate interconversion. In terms of biological role, catalyzes the dehydration of D-mannonate. Has no detectable activity with a panel of 70 other acid sugars (in vitro). This Xanthomonas oryzae pv. oryzicola (strain BLS256) protein is D-mannonate dehydratase.